Consider the following 322-residue polypeptide: Probable heme-iron transport system permease protein IsdF (322 aa).

9 consecutive transmembrane segments (helical) span residues 9 to 29 (LLFL…FVTG), 61 to 81 (ILIA…LQAA), 89 to 109 (ANII…MLFI), 114 to 134 (FYLP…IILL), 143 to 163 (VSMI…LEIL), 179 to 199 (IWSD…LTLL), 233 to 253 (VFLA…GIIV), 267 to 287 (VLIP…DLLG), and 294 to 314 (LEIP…IYLI).

It belongs to the binding-protein-dependent transport system permease family. FecCD subfamily.

It localises to the cell membrane. In terms of biological role, part of the binding-protein-dependent transport system for heme-iron. Responsible for the translocation of the substrate across the membrane. This chain is Probable heme-iron transport system permease protein IsdF (isdF), found in Staphylococcus aureus (strain Mu3 / ATCC 700698).